The chain runs to 276 residues: Formamidopyrimidine-DNA glycosylase (276 aa).

Catalysis depends on P2, which acts as the Schiff-base intermediate with DNA. E3 functions as the Proton donor in the catalytic mechanism. K59 serves as the catalytic Proton donor; for beta-elimination activity. Positions 92, 111, and 155 each coordinate DNA. The segment at 239-273 adopts an FPG-type zinc-finger fold; it reads AVYGQTGAPCPRCGTAIEKIKVGGRGTHFCPTCQQ. Residue R263 is the Proton donor; for delta-elimination activity of the active site.

Belongs to the FPG family. In terms of assembly, monomer. Zn(2+) is required as a cofactor.

It catalyses the reaction Hydrolysis of DNA containing ring-opened 7-methylguanine residues, releasing 2,6-diamino-4-hydroxy-5-(N-methyl)formamidopyrimidine.. It carries out the reaction 2'-deoxyribonucleotide-(2'-deoxyribose 5'-phosphate)-2'-deoxyribonucleotide-DNA = a 3'-end 2'-deoxyribonucleotide-(2,3-dehydro-2,3-deoxyribose 5'-phosphate)-DNA + a 5'-end 5'-phospho-2'-deoxyribonucleoside-DNA + H(+). In terms of biological role, involved in base excision repair of DNA damaged by oxidation or by mutagenic agents. Acts as a DNA glycosylase that recognizes and removes damaged bases. Has a preference for oxidized purines, such as 7,8-dihydro-8-oxoguanine (8-oxoG). Has AP (apurinic/apyrimidinic) lyase activity and introduces nicks in the DNA strand. Cleaves the DNA backbone by beta-delta elimination to generate a single-strand break at the site of the removed base with both 3'- and 5'-phosphates. The sequence is that of Formamidopyrimidine-DNA glycosylase from Exiguobacterium sibiricum (strain DSM 17290 / CCUG 55495 / CIP 109462 / JCM 13490 / 255-15).